Consider the following 639-residue polypeptide: MSSFAGRMKEYPSISLDRFDRENLHARAYFLSHCHKDHMKGLKGPLLKRKLKFSLTVKLYCSYVTKELLLSNPRYAFWEDHIVPLELDSPTSISLIDESTGETEDVVVTLLSAGHCPGSVMFLFEGAKGTVLYTGDFRLAVGDAARMEYLHSGDRVKDIQSVYIDTTFFDPKYYQIPSREACLAGIQQLVQDWICQSPYHVVWLNCKAAYGYEYLFTNLGQEFNSQIHVNSLDMFKKMPEILCHVTTNRATQIHACRHPKDEEFFRANRLPCGSTAPDGIPLNIISIKPSTIWFGERTRKTSVVVKMGSSSYRACFSFHSSYLEVKDFLSYICPVNIYPNVIPLGKTVEDLTELLKPLCRKHCGREEIVYKPLGALKRTRKRSTSEGSDSDGDLFEEVSTAPRRRKITVSDLTTVAIRVRPHSANADSHDNDQTYSLIKLCPSAHTSNYMDCTESNDDDDDEDDAAEQTPAAAPPPSSTEKPCSKHTHSDSSLTSSTQPCWEKFFKAEVVLTDESELENSQNTQTLSTENTASQSPELFQDEDEDSSVHMSSSQSTHISDAGTESLSQVDTIMVQEDHSKACNLQHKTEEAAELKSDSQVSSDFELPPTPGSKVPQPEDLKELYRKLAAGEDVVARQIF.

Disordered stretches follow at residues 450-496, 515-570, and 590-617; these read MDCT…LTSS, SELE…SQVD, and EAAELKSDSQVSSDFELPPTPGSKVPQP. Residues 454–466 are compositionally biased toward acidic residues; it reads ESNDDDDDEDDAA. Residues 518–537 are compositionally biased toward polar residues; sequence ENSQNTQTLSTENTASQSPE. Low complexity predominate over residues 548 to 560; it reads VHMSSSQSTHISD.

This sequence belongs to the DNA repair metallo-beta-lactamase (DRMBL) family.

Its subcellular location is the nucleus. Its function is as follows. May have a role in the processing of DNA double strand breaks (DSBs) prior to their repair by the non homologous end joining (NHEJ) pathway. Probably exhibits both exonuclease and endonuclease activity. The sequence is that of Protein artemis (dclre1c) from Danio rerio (Zebrafish).